A 450-amino-acid chain; its full sequence is Phosphoglucosamine mutase (450 aa).

S97 serves as the catalytic Phosphoserine intermediate. 4 residues coordinate Mg(2+): S97, D236, D238, and D240. S97 is modified (phosphoserine).

The protein belongs to the phosphohexose mutase family. Requires Mg(2+) as cofactor. In terms of processing, activated by phosphorylation.

The enzyme catalyses alpha-D-glucosamine 1-phosphate = D-glucosamine 6-phosphate. Its function is as follows. Catalyzes the conversion of glucosamine-6-phosphate to glucosamine-1-phosphate. This Prochlorococcus marinus (strain MIT 9215) protein is Phosphoglucosamine mutase.